Reading from the N-terminus, the 2998-residue chain is Probable polyketide synthase 14 (2998 aa).

A Ketosynthase family 3 (KS3) domain is found at 19-456; that stretch reads EDDIAIIGIG…GSNCCLILSE (438 aa). Residues Cys-189, His-331, and His-376 each act as for beta-ketoacyl synthase activity in the active site. Residues 657-690 form an acyl/malonyl transferase region; the sequence is GIEASFIVGHSLGEIPAAYCSGMITLDTLCYLIY. Ser-667 (for acyl/malonyl transferase activity) is an active-site residue. Positions 962–1084 are N-terminal hotdog fold; the sequence is IDQLGFSLIE…GNFQLFTSGN (123 aa). The 288-residue stretch at 962–1249 folds into the PKS/mFAS DH domain; sequence IDQLGFSLIE…CKSLTIIKDS (288 aa). The Proton acceptor; for dehydratase activity role is filled by His-996. The segment at 1101–1249 is C-terminal hotdog fold; the sequence is NLTKLTKNEL…CKSLTIIKDS (149 aa). Asp-1159 functions as the Proton donor; for dehydratase activity in the catalytic mechanism. A helical membrane pass occupies residues 1979–1999; the sequence is SILIHSGSGGIGLSALNILKW. Positions 2476-2553 constitute a Carrier domain; that stretch reads ENDTSIDSLF…SSIKLITNQL (78 aa). An O-(pantetheine 4'-phosphoryl)serine modification is found at Ser-2513. Residues 2559 to 2578 form a disordered region; it reads DGQQQQHRQNKKNNNIPENK. Residues 2561 to 2573 show a composition bias toward low complexity; the sequence is QQQQHRQNKKNNN. Residues 2621 to 2641 form a helical membrane-spanning segment; the sequence is IFLTGSTGFLGAYLLWYLIQM.

It depends on pantetheine 4'-phosphate as a cofactor.

The protein resides in the membrane. Its function is as follows. Probable polyketide synthase. This Dictyostelium discoideum (Social amoeba) protein is Probable polyketide synthase 14 (pks14).